Here is a 312-residue protein sequence, read N- to C-terminus: Very-long-chain 3-oxoacyl-CoA reductase (312 aa).

A helical transmembrane segment spans residues 4 to 24 (ALPAAGFLYWVGAGTVAYLAL). 50–79 (GEWAVVTGGTDGIGKSYAEELAKRGMKVVL) provides a ligand contact to NADP(+). Transmembrane regions (helical) follow at residues 182–202 (GAILNISSGSGMFPVPLLTIY) and 271–291 (GYLIHVLMGWIISNLPSWIYL). Residue Ser-189 participates in substrate binding. Tyr-202 acts as the Proton acceptor in catalysis. Residues 308–312 (KIKKN) carry the Di-lysine motif motif.

This sequence belongs to the short-chain dehydrogenases/reductases (SDR) family. 17-beta-HSD 3 subfamily.

The protein resides in the endoplasmic reticulum membrane. The catalysed reaction is a very-long-chain (3R)-3-hydroxyacyl-CoA + NADP(+) = a very-long-chain 3-oxoacyl-CoA + NADPH + H(+). The enzyme catalyses 17beta-estradiol + NAD(+) = estrone + NADH + H(+). It carries out the reaction 17beta-estradiol + NADP(+) = estrone + NADPH + H(+). It catalyses the reaction 3-oxooctadecanoyl-CoA + NADPH + H(+) = (3R)-hydroxyoctadecanoyl-CoA + NADP(+). The catalysed reaction is (7Z,10Z,13Z,16Z)-3-oxodocosatetraenoyl-CoA + NADPH + H(+) = (3R)-hydroxy-(7Z,10Z,13Z,16Z)-docosatetraenoyl-CoA + NADP(+). The enzyme catalyses 3-oxo-(7Z,10Z,13Z,16Z,19Z)-docosapentaenoyl-CoA + NADPH + H(+) = (3R)-hydroxy-(7Z,10Z,13Z,16Z,19Z)-docosapentaenoyl-CoA + NADP(+). It carries out the reaction (8Z,11Z,14Z)-3-oxoeicosatrienoyl-CoA + NADPH + H(+) = (3R)-hydroxy-(8Z,11Z,14Z)-eicosatrienoyl-CoA + NADP(+). It participates in lipid metabolism; fatty acid biosynthesis. Its pathway is steroid biosynthesis; estrogen biosynthesis. Its function is as follows. Catalyzes the second of the four reactions of the long-chain fatty acids elongation cycle. This endoplasmic reticulum-bound enzymatic process, allows the addition of two carbons to the chain of long- and very long-chain fatty acids/VLCFAs per cycle. This enzyme has a 3-ketoacyl-CoA reductase activity, reducing 3-ketoacyl-CoA to 3-hydroxyacyl-CoA, within each cycle of fatty acid elongation. Thereby, it may participate in the production of VLCFAs of different chain lengths that are involved in multiple biological processes as precursors of membrane lipids and lipid mediators. May also catalyze the transformation of estrone (E1) into estradiol (E2) and play a role in estrogen formation. The chain is Very-long-chain 3-oxoacyl-CoA reductase (HSD17B12) from Macaca fascicularis (Crab-eating macaque).